Here is a 247-residue protein sequence, read N- to C-terminus: Putative 2-succinyl-6-hydroxy-2,4-cyclohexadiene-1-carboxylate synthase (247 aa).

Residues 4–229 form the AB hydrolase-1 domain; it reads IIFLHGLLGT…CAGHNSHLEN (226 aa).

The protein belongs to the AB hydrolase superfamily. MenH family. As to quaternary structure, monomer.

The enzyme catalyses 5-enolpyruvoyl-6-hydroxy-2-succinyl-cyclohex-3-ene-1-carboxylate = (1R,6R)-6-hydroxy-2-succinyl-cyclohexa-2,4-diene-1-carboxylate + pyruvate. The protein operates within quinol/quinone metabolism; 1,4-dihydroxy-2-naphthoate biosynthesis; 1,4-dihydroxy-2-naphthoate from chorismate: step 3/7. It participates in quinol/quinone metabolism; menaquinone biosynthesis. Its function is as follows. Catalyzes a proton abstraction reaction that results in 2,5-elimination of pyruvate from 2-succinyl-5-enolpyruvyl-6-hydroxy-3-cyclohexene-1-carboxylate (SEPHCHC) and the formation of 2-succinyl-6-hydroxy-2,4-cyclohexadiene-1-carboxylate (SHCHC). The protein is Putative 2-succinyl-6-hydroxy-2,4-cyclohexadiene-1-carboxylate synthase of Haemophilus influenzae (strain ATCC 51907 / DSM 11121 / KW20 / Rd).